A 670-amino-acid chain; its full sequence is DNA ligase (670 aa).

NAD(+)-binding positions include 35-39, 84-85, and glutamate 116; these read DSVYD and SL. Lysine 118 functions as the N6-AMP-lysine intermediate in the catalytic mechanism. NAD(+) contacts are provided by arginine 139, glutamate 176, lysine 293, and lysine 317. Zn(2+) contacts are provided by cysteine 411, cysteine 414, cysteine 429, and cysteine 435. In terms of domain architecture, BRCT spans 592–670; it reads VVKSEIAGKT…EEAFLKLLKS (79 aa).

It belongs to the NAD-dependent DNA ligase family. LigA subfamily. Mg(2+) is required as a cofactor. Mn(2+) serves as cofactor.

The enzyme catalyses NAD(+) + (deoxyribonucleotide)n-3'-hydroxyl + 5'-phospho-(deoxyribonucleotide)m = (deoxyribonucleotide)n+m + AMP + beta-nicotinamide D-nucleotide.. DNA ligase that catalyzes the formation of phosphodiester linkages between 5'-phosphoryl and 3'-hydroxyl groups in double-stranded DNA using NAD as a coenzyme and as the energy source for the reaction. It is essential for DNA replication and repair of damaged DNA. This is DNA ligase from Coxiella burnetii (strain RSA 331 / Henzerling II).